Here is a 415-residue protein sequence, read N- to C-terminus: Probable glucan 1,3-beta-glucosidase A (415 aa).

Residues 1 to 22 (MLSRLSQTALVALSLMTVLTEA) form the signal peptide. The Proton donor role is filled by Glu210. 2 cysteine pairs are disulfide-bonded: Cys290–Cys414 and Cys315–Cys341. The Nucleophile role is filled by Glu307. The segment at 335–359 (SPRYGDCGNKRQGSSSGLSEQERSD) is disordered.

This sequence belongs to the glycosyl hydrolase 5 (cellulase A) family. As to quaternary structure, monomer. It depends on Mn(2+) as a cofactor.

The protein resides in the secreted. It carries out the reaction Successive hydrolysis of beta-D-glucose units from the non-reducing ends of (1-&gt;3)-beta-D-glucans, releasing alpha-glucose.. In terms of biological role, beta-glucanases participate in the metabolism of beta-glucan, the main structural component of the cell wall. It could also function biosynthetically as a transglycosylase. The protein is Probable glucan 1,3-beta-glucosidase A (exgA) of Aspergillus clavatus (strain ATCC 1007 / CBS 513.65 / DSM 816 / NCTC 3887 / NRRL 1 / QM 1276 / 107).